The following is a 113-amino-acid chain: MTITCSLSDKKCIPCEGGVPPLEKKEIDKLLSELQNEWIVNESGHLYKKYKFPDFMQPIEFANKIAALAEQEVHHPDLTISWGACIVEIWTHKIDGLTESDFILAAKIDLLQN.

It belongs to the pterin-4-alpha-carbinolamine dehydratase family.

It carries out the reaction (4aS,6R)-4a-hydroxy-L-erythro-5,6,7,8-tetrahydrobiopterin = (6R)-L-erythro-6,7-dihydrobiopterin + H2O. This Rickettsia bellii (strain OSU 85-389) protein is Putative pterin-4-alpha-carbinolamine dehydratase.